A 461-amino-acid polypeptide reads, in one-letter code: RNA-binding protein ZCH321 (461 aa).

2 C3H1-type zinc fingers span residues Leu-63–Leu-85 and Ala-181–Lys-208. Residues Thr-224 to Val-243 are disordered. Residues Trp-446–Tyr-451 carry the MKT1-binding motif motif.

Its function is as follows. RNA-binding protein involved in regulation of mRNA stability. Promotes mRNA stabilization by recruiting MKT1 and PBP1. Stabilizes transcripts encoding mitochondrial proteins. The protein is RNA-binding protein ZCH321 of Trypanosoma brucei brucei (strain 927/4 GUTat10.1).